The primary structure comprises 153 residues: Probable trafficking protein particle complex subunit 2 (153 aa).

Belongs to the TRAPP small subunits family. Sedlin subfamily. As to quaternary structure, part of the multisubunit TRAPP (transport protein particle) complex.

Its subcellular location is the cytoplasm. It is found in the perinuclear region. It localises to the endoplasmic reticulum. The protein resides in the golgi apparatus. Its function is as follows. May play a role in vesicular transport from endoplasmic reticulum to Golgi. The polypeptide is Probable trafficking protein particle complex subunit 2 (Nematostella vectensis (Starlet sea anemone)).